A 269-amino-acid polypeptide reads, in one-letter code: Chymotrypsin-like elastase family member 2A (269 aa).

Positions 1 to 16 (MIRALLLSTLVAGALS) are cleaved as a signal peptide. A propeptide spans 17–28 (CGVPTYPPQLSR) (activation peptide). The Peptidase S1 domain maps to 29 to 267 (VVGGEDARPN…YNDWISSVIE (239 aa)). C58 and C74 form a disulfide bridge. Active-site charge relay system residues include H73 and D121. Intrachain disulfides connect C155-C222, C186-C202, and C212-C243. The Charge relay system role is filled by S216.

The protein belongs to the peptidase S1 family. Elastase subfamily. In terms of assembly, interacts with CPA1. Interacts with SERPINA1. Pancreas.

It localises to the secreted. It carries out the reaction Preferential cleavage: Leu-|-Xaa, Met-|-Xaa and Phe-|-Xaa. Hydrolyzes elastin.. Its function is as follows. Elastase that enhances insulin signaling and might have a physiologic role in cellular glucose metabolism. Circulates in plasma and reduces platelet hyperactivation, triggers both insulin secretion and degradation, and increases insulin sensitivity. This chain is Chymotrypsin-like elastase family member 2A (CELA2A), found in Bos taurus (Bovine).